The sequence spans 710 residues: Solute carrier organic anion transporter family member 3A1 (710 aa).

Met1 bears the N-acetylmethionine mark. The span at 1–15 (MQGKKPGGSSGGGRS) shows a compositional bias: gly residues. The tract at residues 1–25 (MQGKKPGGSSGGGRSGELQGDEAQR) is disordered. The Cytoplasmic portion of the chain corresponds to 1-40 (MQGKKPGGSSGGGRSGELQGDEAQRNKKKKKKVSCFSNIK). Residues 41 to 60 (IFLVSECALMLAQGTVGAYL) traverse the membrane as a helical segment. Residues 61 to 79 (VSVLTTLERRFNLQSADVG) are Extracellular-facing. Residues 80-100 (VIASSFEIGNLALILFVSYFG) traverse the membrane as a helical segment. Residues 101-106 (ARGHRP) lie on the Cytoplasmic side of the membrane. Residues 107–131 (RLIGCGGIVMALGALLSALPEFLTH) traverse the membrane as a helical segment. Residues 132-174 (QYKYEAGEIRWGAEGRDVCAANGSGGDEGPDPDLICRNRTATN) are Extracellular-facing. Residues Asn153 and Asn169 are each glycosylated (N-linked (GlcNAc...) asparagine). The helical transmembrane segment at 175-203 (MMYLLLIGAQVLLGIGATPVQPLGVSYID) threads the bilayer. The Cytoplasmic segment spans residues 204-222 (DHVRRKDSSLYIGILFTML). The helical transmembrane segment at 223-243 (VFGPACGFILGSFCTKIYVDA) threads the bilayer. Residues 244–261 (VFIDTSNLDITPDDPRWI) lie on the Extracellular side of the membrane. A helical membrane pass occupies residues 262–286 (GAWWGGFLLCGALLFFSSLLMFGFP). The Cytoplasmic segment spans residues 287-344 (QSLPPHSEPAMESEQAMLSEREYERPKPSNGVLRHPLEPDSSASCFQQLRVIPKVTKH). The helical transmembrane segment at 345–366 (LLSNPVFTCIILAACMEIAVVA) threads the bilayer. The Extracellular segment spans residues 367-386 (GFAAFLGKYLEQQFNLTTSS). An N-linked (GlcNAc...) asparagine glycan is attached at Asn381. A helical membrane pass occupies residues 387–410 (ANQLLGMTAIPCACLGIFLGGLLV). Residues 411–414 (KKLS) lie on the Cytoplasmic side of the membrane. A helical membrane pass occupies residues 415 to 438 (LSALGAIRMAMLVNLVSTACYVSF). The Extracellular segment spans residues 439 to 539 (LFLGCDTGPV…PGCQEAFLTF (101 aa)). N-linked (GlcNAc...) asparagine glycosylation occurs at Asn457. The Kazal-like domain maps to 465-513 (LDPYSPCNNNCECQTDSFTPVCGADGITYLSACFAGCNSTNLTGCACLT). 3 disulfides stabilise this stretch: Cys471-Cys501, Cys477-Cys497, and Cys486-Cys511. Asn502, Asn505, and Asn519 each carry an N-linked (GlcNAc...) asparagine glycan. Residues 540 to 562 (LCVMCICSLIGAMAQTPSVIILI) traverse the membrane as a helical segment. Residues 563–571 (RTVSPELKS) are Cytoplasmic-facing. Residues 572–597 (YALGVLFLLLRLLGFIPPPLIFGAGI) traverse the membrane as a helical segment. Residues 598 to 630 (DSTCLFWSTFCGEQGACVLYDNVVYRYLYVSIA) lie on the Extracellular side of the membrane. Residues 631 to 648 (IALKSFAFILYTTTWQCL) form a helical membrane-spanning segment. The Cytoplasmic portion of the chain corresponds to 649-705 (RKNYKRYIKNHEGGLSTSEFFASTLTLDNLGRDPVPANQTHRTKFIYNLEDHEWCEN).

It belongs to the organo anion transporter (TC 2.A.60) family. As to expression, generally the expression of isoform 1 is higher than that of isoform 2. Expressed in placental trophoblasts. Expressed in pancreas, kidney, liver, lung, brain, heart, cerebellum, peripheral blood leukocyte, colon, small intestine, ovary, testis, prostate, thyroid, thymus and spleen. Expressed in fetal brain, heart, kidney, liver, lung, skeletal muscle, spleen and pancreas. In testis, detected in spermatogonia at different stages and absent from Sertoli cells. Expressed in the choroid plexus epithelium, at the basolateral membrane. In brain, also very abundant in the gray matter of the frontal cortex, but not associated with neuronal cell bodies. Not detected in the white matter. In terms of tissue distribution, expressed in heart, brain, cerebellum, testis, lung, thyroid, spoleen and liver. In testis, primarily localized to the basal membrane of Sertoli cells and weakly expressed within the tubules. In testis, also present in spermatogonia at different stages. In brain, expressed in the choroid plexus epithelium, at the apical membrane as well as in the subapical intracellular vesicular compartments. In brain, also associated with neuronal bodies and axons in both the gray and the white matters of the frontal cortex.

It localises to the basolateral cell membrane. The protein resides in the apical cell membrane. The protein localises to the basal cell membrane. The enzyme catalyses L-thyroxine(out) = L-thyroxine(in). The catalysed reaction is prostaglandin E1(out) = prostaglandin E1(in). It catalyses the reaction prostaglandin E2(out) = prostaglandin E2(in). It carries out the reaction prostaglandin F2alpha(out) = prostaglandin F2alpha(in). The enzyme catalyses (5Z,8Z,11Z,14Z)-eicosatetraenoate(out) = (5Z,8Z,11Z,14Z)-eicosatetraenoate(in). The catalysed reaction is taurocholate(out) = taurocholate(in). It catalyses the reaction glycocholate(out) = glycocholate(in). It carries out the reaction estrone 3-sulfate(out) = estrone 3-sulfate(in). The enzyme catalyses argipressin(out) = argipressin(in). With respect to regulation, stimulated by extracellular acidic pH. Functionally, putative organic anion antiporter with apparent broad substrate specificity. Recognizes various substrates including thyroid hormone L-thyroxine, prostanoids such as prostaglandin E1 and E2, bile acids such as taurocholate, glycolate and glycochenodeoxycholate and peptide hormones such as L-arginine vasopressin, likely operating in a tissue-specific manner. The transport mechanism, its electrogenicity and potential tissue-specific counterions remain to be elucidated. This is Solute carrier organic anion transporter family member 3A1 (SLCO3A1) from Homo sapiens (Human).